The following is a 373-amino-acid chain: 3-isopropylmalate dehydrogenase (373 aa).

Position 82 to 93 (82 to 93) interacts with NAD(+); the sequence is GPKWGTGTVRPE. Positions 100, 110, 139, and 231 each coordinate substrate. 3 residues coordinate Mg(2+): D231, D256, and D260. Position 295–306 (295–306) interacts with NAD(+); that stretch reads GSAPDLPANKVN.

Belongs to the isocitrate and isopropylmalate dehydrogenases family. In terms of assembly, homodimer. The cofactor is Mg(2+). Mn(2+) is required as a cofactor.

Its subcellular location is the cytoplasm. It carries out the reaction (2R,3S)-3-isopropylmalate + NAD(+) = 4-methyl-2-oxopentanoate + CO2 + NADH. It participates in amino-acid biosynthesis; L-leucine biosynthesis; L-leucine from 3-methyl-2-oxobutanoate: step 3/4. Catalyzes the oxidation of 3-carboxy-2-hydroxy-4-methylpentanoate (3-isopropylmalate) to 3-carboxy-4-methyl-2-oxopentanoate. The product decarboxylates to 4-methyl-2 oxopentanoate. The protein is 3-isopropylmalate dehydrogenase (LEU2) of Candida albicans (Yeast).